The following is a 203-amino-acid chain: ESCRT-related protein CHMP1B (203 aa).

Coiled-coil stretches lie at residues 13–51 (DLKF…MDGA) and 109–140 (GNLQ…NAMA). Residues 172 to 203 (PQPAGHAIPTKTEEKVDEDDLSRRLAELKARG) form a disordered region. Residues 192 to 203 (LSRRLAELKARG) show a composition bias toward basic and acidic residues.

Belongs to the SNF7 family. In terms of assembly, interacts with CHMP1A and LIP5. Interacts with VPS2.2.

It localises to the cytoplasm. Its subcellular location is the endosome membrane. Its function is as follows. Involved in ESCRT-dependent multivesicular body (MVB) formation and sorting of endosomal cargo proteins into MVBs. Mediates the MVB sorting of the auxin carriers PIN1, PIN2 and AUX1. Required for embryonic axis establishment and seedling growth. Required for autophagic degradation of plastid proteins. Promotes the efficient sequestration of cargo from plastids into autophagosomes. Mediates the efficient delivery of autophagic plastid bodies to the vacuole, but not into the cytoplasm. In Arabidopsis thaliana (Mouse-ear cress), this protein is ESCRT-related protein CHMP1B.